We begin with the raw amino-acid sequence, 270 residues long: Urease accessory protein UreD (270 aa).

This sequence belongs to the UreD family. In terms of assembly, ureD, UreF and UreG form a complex that acts as a GTP-hydrolysis-dependent molecular chaperone, activating the urease apoprotein by helping to assemble the nickel containing metallocenter of UreC. The UreE protein probably delivers the nickel.

The protein resides in the cytoplasm. Functionally, required for maturation of urease via the functional incorporation of the urease nickel metallocenter. The protein is Urease accessory protein UreD of Beijerinckia indica subsp. indica (strain ATCC 9039 / DSM 1715 / NCIMB 8712).